The chain runs to 109 residues: Iron-sulfur cluster assembly protein CyaY (109 aa).

Belongs to the frataxin family.

In terms of biological role, involved in iron-sulfur (Fe-S) cluster assembly. May act as a regulator of Fe-S biogenesis. In Bordetella bronchiseptica (strain ATCC BAA-588 / NCTC 13252 / RB50) (Alcaligenes bronchisepticus), this protein is Iron-sulfur cluster assembly protein CyaY.